A 229-amino-acid chain; its full sequence is Flagellar L-ring protein (229 aa).

A signal peptide spans 1–25 (MKQVRLPSSATVRAACAVAVAALAG). Cys-26 carries the N-palmitoyl cysteine lipid modification. Residue Cys-26 is the site of S-diacylglycerol cysteine attachment.

It belongs to the FlgH family. In terms of assembly, the basal body constitutes a major portion of the flagellar organelle and consists of four rings (L,P,S, and M) mounted on a central rod.

It is found in the cell outer membrane. The protein localises to the bacterial flagellum basal body. Its function is as follows. Assembles around the rod to form the L-ring and probably protects the motor/basal body from shearing forces during rotation. This Burkholderia cenocepacia (strain ATCC BAA-245 / DSM 16553 / LMG 16656 / NCTC 13227 / J2315 / CF5610) (Burkholderia cepacia (strain J2315)) protein is Flagellar L-ring protein.